A 221-amino-acid chain; its full sequence is MTDQLQGSPVLAEVLGDALPKLERFHAKIAEEGEPRGLIGPRDVDIIWERHILNSAAIVPYVRNATNGIRFKTVADVGSGGGFPGLVAAACLPDHDFTLIEPMERRIEWLHECVGLMQLQNVEIIRGRSDAVIQQVRKREIHPFAVVTCRAVAPMTKLSGWTLPLLKPSGQLIALKGRSAQAEIDKAGKEIAKFGGRRPRVVEAAVGPDLEPTHVVIVDKR.

Positions 78, 83, and 150 each coordinate S-adenosyl-L-methionine.

It belongs to the methyltransferase superfamily. RNA methyltransferase RsmG family.

It is found in the cytoplasm. Specifically methylates the N7 position of a guanine in 16S rRNA. This chain is Ribosomal RNA small subunit methyltransferase G, found in Bifidobacterium longum (strain DJO10A).